Here is a 307-residue protein sequence, read N- to C-terminus: Malate dehydrogenase (307 aa).

NAD(+) is bound by residues 8 to 13 and Asp32; that span reads GAGNVG. Arg81 and Arg87 together coordinate substrate. Residues Asn94 and 117-119 contribute to the NAD(+) site; that span reads VSN. Substrate contacts are provided by Asn119 and Arg150. Catalysis depends on His174, which acts as the Proton acceptor.

Belongs to the LDH/MDH superfamily. MDH type 3 family.

It catalyses the reaction (S)-malate + NAD(+) = oxaloacetate + NADH + H(+). Functionally, catalyzes the reversible oxidation of malate to oxaloacetate. The protein is Malate dehydrogenase of Dehalococcoides mccartyi (strain ATCC BAA-2266 / KCTC 15142 / 195) (Dehalococcoides ethenogenes (strain 195)).